The primary structure comprises 347 residues: Protein RecA (347 aa).

64–71 (GPESSGKT) contacts ATP.

This sequence belongs to the RecA family.

The protein resides in the cytoplasm. Can catalyze the hydrolysis of ATP in the presence of single-stranded DNA, the ATP-dependent uptake of single-stranded DNA by duplex DNA, and the ATP-dependent hybridization of homologous single-stranded DNAs. It interacts with LexA causing its activation and leading to its autocatalytic cleavage. The chain is Protein RecA from Bartonella bacilliformis (strain ATCC 35685 / KC583 / Herrer 020/F12,63).